The sequence spans 316 residues: Ferrochelatase (316 aa).

2 residues coordinate Fe cation: His188 and Glu269.

This sequence belongs to the ferrochelatase family.

It is found in the cytoplasm. It carries out the reaction heme b + 2 H(+) = protoporphyrin IX + Fe(2+). It functions in the pathway porphyrin-containing compound metabolism; protoheme biosynthesis; protoheme from protoporphyrin-IX: step 1/1. In terms of biological role, catalyzes the ferrous insertion into protoporphyrin IX. In Wolinella succinogenes (strain ATCC 29543 / DSM 1740 / CCUG 13145 / JCM 31913 / LMG 7466 / NCTC 11488 / FDC 602W) (Vibrio succinogenes), this protein is Ferrochelatase.